Reading from the N-terminus, the 293-residue chain is MELLQQYLQQQQEELKIQRELHSSGQSQNAYQQQQQLEDDEEYDDDQLPLSPTQTEEFDYDNDYNDEEFYDEDDDFKEDDDEEEEEEDDEMYPIRQDNNIDDDDYEEDEEEQLLYPTNNNNNTTTTTPYTTYNNNNNNDINNNNNNNTKSEMTMIPTVSSNISLNPLQILEQYLNTQQQIQQKQFQKHQEELQIQQLQQNHPLQLLEQYLQQQQQIQQEQFFNHQRENQVPNSNSNSLNSSNENNNNNVNNNNNIINNNNNSINNNMNNSNNNNNNNNNGNKNPFFLDDFIYI.

Disordered regions lie at residues 20-148 (ELHS…NNNT) and 226-283 (RENQ…GNKN). Composition is skewed to acidic residues over residues 37-47 (LEDDEEYDDDQ), 56-91 (EEFD…DDEM), and 99-112 (NIDD…EEEQ). 2 stretches are compositionally biased toward low complexity: residues 117–148 (TNNN…NNNT) and 232–283 (NSNS…GNKN).

This is an uncharacterized protein from Dictyostelium discoideum (Social amoeba).